The following is a 379-amino-acid chain: Protein trichome birefringence-like 36 (379 aa).

A helical; Signal-anchor for type II membrane protein membrane pass occupies residues 8-24 (VLFLSLCLILGKVVLSQ). The short motif at 123–125 (GDS) is the GDS motif element. Positions 353 to 367 (DCSHWCLPGVPDIWN) match the DCXHWCLPGXXDXWN motif motif.

This sequence belongs to the PC-esterase family. TBL subfamily.

The protein resides in the membrane. May act as a bridging protein that binds pectin and other cell wall polysaccharides. Probably involved in maintaining esterification of pectins. May be involved in the specific O-acetylation of cell wall polymers. This Arabidopsis thaliana (Mouse-ear cress) protein is Protein trichome birefringence-like 36 (TBL36).